A 148-amino-acid polypeptide reads, in one-letter code: Protein MGF 360-18R (148 aa).

Belongs to the asfivirus MGF 360 family.

Functionally, plays a role in virus cell tropism, and may be required for efficient virus replication in macrophages. This African swine fever virus (strain Badajoz 1971 Vero-adapted) (Ba71V) protein is Protein MGF 360-18R.